A 161-amino-acid chain; its full sequence is Afimbrial adhesin AFA-I (161 aa).

A signal peptide spans 1 to 21; that stretch reads MKKLAIIGATSVMMMTGTAQA.

The protein belongs to the Dr-adhesin family.

It localises to the fimbrium. Hemagglutinins of uropathogenic E.coli mediate adherence to the upper urinary tract. These adhesins bind to the Dr blood group antigen and also agglutinate human erythrocytes in the presence of D-mannose (mannose-resistant hemagglutination (MRHA)). This is Afimbrial adhesin AFA-I (afaE1) from Escherichia coli.